The primary structure comprises 1323 residues: Lysine-specific demethylase 3A (1323 aa).

Disordered stretches follow at residues 255–287, 307–337, and 385–416; these read TRTG…PSMC, ATPS…PQGC, and SEPK…GLPK. Ser264 is modified (phosphoserine). 2 stretches are compositionally biased toward polar residues: residues 266–283 and 307–327; these read ENNG…SEAS and ATPS…NSPP. Ser325 is subject to Phosphoserine. Ser446 carries the phosphoserine modification. 2 disordered regions span residues 468 to 487 and 495 to 517; these read AEKK…LKET and SCCT…LTDP. Polar residues-rich tracts occupy residues 477 to 486 and 495 to 507; these read LGSQSQNLKE and SCCT…TQTP. The C6-type zinc-finger motif lies at 662-687; sequence CDVCDTTIFNLHWVCPRCGFGVCVDC. An LXXLL motif motif is present at residues 885 to 889; that stretch reads LRNLL. At Lys895 the chain carries N6-acetyllysine. In terms of domain architecture, JmjC spans 1060–1283; sequence MPSRFDDLMA…HCFWLTQEFR (224 aa). Fe cation is bound by residues His1122, Asp1124, and His1251.

The protein belongs to the JHDM2 histone demethylase family. In terms of assembly, interacts with VRK1. The cofactor is Fe(2+). In terms of tissue distribution, highly expressed in testis (at protein level). Also expressed at high levels in tissues responsive to sympathetic nerve activity such as brown adipose tissue and skeletal muscle.

It is found in the cytoplasm. The protein resides in the nucleus. It carries out the reaction N(6),N(6)-dimethyl-L-lysyl(9)-[histone H3] + 2 2-oxoglutarate + 2 O2 = L-lysyl(9)-[histone H3] + 2 formaldehyde + 2 succinate + 2 CO2. In terms of biological role, histone demethylase that specifically demethylates 'Lys-9' of histone H3, thereby playing a central role in histone code. Preferentially demethylates mono- and dimethylated H3 'Lys-9' residue, with a preference for dimethylated residue, while it has weak or no activity on trimethylated H3 'Lys-9'. Demethylation of Lys residue generates formaldehyde and succinate. Involved in hormone-dependent transcriptional activation, by participating in recruitment to androgen-receptor target genes, resulting in H3 'Lys-9' demethylation and transcriptional activation. Involved in spermatogenesis by regulating expression of target genes such as PRM1 and TNP1 which are required for packaging and condensation of sperm chromatin. Involved in obesity resistance through regulation of metabolic genes such as PPARA and UCP1. This is Lysine-specific demethylase 3A (Kdm3a) from Mus musculus (Mouse).